We begin with the raw amino-acid sequence, 529 residues long: Bifunctional purine biosynthesis protein PurH (529 aa).

The MGS-like domain occupies 1–148; sequence MQQRRPVRRA…KNHKDVAIVV (148 aa).

The protein belongs to the PurH family.

The enzyme catalyses (6R)-10-formyltetrahydrofolate + 5-amino-1-(5-phospho-beta-D-ribosyl)imidazole-4-carboxamide = 5-formamido-1-(5-phospho-D-ribosyl)imidazole-4-carboxamide + (6S)-5,6,7,8-tetrahydrofolate. It catalyses the reaction IMP + H2O = 5-formamido-1-(5-phospho-D-ribosyl)imidazole-4-carboxamide. Its pathway is purine metabolism; IMP biosynthesis via de novo pathway; 5-formamido-1-(5-phospho-D-ribosyl)imidazole-4-carboxamide from 5-amino-1-(5-phospho-D-ribosyl)imidazole-4-carboxamide (10-formyl THF route): step 1/1. The protein operates within purine metabolism; IMP biosynthesis via de novo pathway; IMP from 5-formamido-1-(5-phospho-D-ribosyl)imidazole-4-carboxamide: step 1/1. The protein is Bifunctional purine biosynthesis protein PurH of Salmonella newport (strain SL254).